The sequence spans 894 residues: Eukaryotic translation initiation factor 3 subunit C (894 aa).

Disordered stretches follow at residues 1–28 (MSRFYRRGASDSDTDSSEDEVEELKANK) and 162–235 (SDYR…VTKM). 3 stretches are compositionally biased toward acidic residues: residues 12–22 (SDTDSSEDEVE), 169–189 (DEDGYETPEDENDEDDFEEVP), and 203–214 (SESESDSDDDDS). Positions 215–224 (FNWSSEPDTN) are enriched in polar residues. In terms of domain architecture, PCI spans 625-801 (YHMHINVELM…DCLIMHRVEP (177 aa)). The disordered stretch occupies residues 824-894 (QILEPRTGRG…RRHPQKPRAF (71 aa)). Residues 845–854 (RNERQGDKQK) show a composition bias toward basic and acidic residues. The segment covering 855–870 (GSGGFQGERRGGPGGP) has biased composition (gly residues). Residues 884 to 894 (QRRHPQKPRAF) are compositionally biased toward basic residues.

The protein belongs to the eIF-3 subunit C family. As to quaternary structure, component of the eukaryotic translation initiation factor 3 (eIF-3) complex.

It is found in the cytoplasm. In terms of biological role, component of the eukaryotic translation initiation factor 3 (eIF-3) complex, which is involved in protein synthesis of a specialized repertoire of mRNAs and, together with other initiation factors, stimulates binding of mRNA and methionyl-tRNAi to the 40S ribosome. The eIF-3 complex specifically targets and initiates translation of a subset of mRNAs involved in cell proliferation. The chain is Eukaryotic translation initiation factor 3 subunit C from Caenorhabditis briggsae.